The primary structure comprises 232 residues: Ferric nitrobindin-like protein (232 aa).

Over residues 1 to 10 (MSENETSKTG) the composition is skewed to polar residues. A disordered region spans residues 1-33 (MSENETSKTGGNAGVPGSGADAPSLSDSPAISG). The short motif at 85 to 91 (GVWRGEG) is the GXWXGXG element.

Belongs to the nitrobindin family.

This chain is Ferric nitrobindin-like protein, found in Corynebacterium efficiens (strain DSM 44549 / YS-314 / AJ 12310 / JCM 11189 / NBRC 100395).